A 413-amino-acid chain; its full sequence is NADH:flavin oxidoreductase FG08077 (413 aa).

FMN is bound at residue 53-56; sequence APLC. Tyr58 serves as a coordination point for substrate. The FMN site is built by Ala88 and Gln130. Position 211 to 214 (211 to 214) interacts with substrate; sequence HAAH. Residues Arg264 and 370–371 contribute to the FMN site; that span reads GR.

The protein belongs to the NADH:flavin oxidoreductase/NADH oxidase family. NamA subfamily. Requires FMN as cofactor.

It participates in mycotoxin biosynthesis. Its function is as follows. NADH:flavin oxidoreductase; part of the gene cluster that mediates the biosynthesis of butenolide, a mycotoxin that shows antibiotic activity but does not seem to play a major role in the spread of head blight in wheat. Butenolide is derived from glutamic acid via a 4-acetamido-2-butenoic acid intermediate. The predicted function of the NADH:flavin oxidoreductase FG08077, the cytochrome P450 monooxygenase FG08079, the decarboxylase FG08083, and the putative acetyltransferase FG08082 are consistent with this pathway, however, the respective activities of the butelonide biosynthesis cluster enzymes have still to be experimentally determined. This is NADH:flavin oxidoreductase FG08077 from Gibberella zeae (strain ATCC MYA-4620 / CBS 123657 / FGSC 9075 / NRRL 31084 / PH-1) (Wheat head blight fungus).